Here is a 336-residue protein sequence, read N- to C-terminus: MALDLEKLKFGTELIKRGFSSMTKGGVIMDVTTAEQAKIAEKAGAVAVMALERVPADIRAAGGVARMADPKKIREILDAVTIPVMAKVRIGHISEAYTLEKLGVDMLDESEVLTPADPFFHLYKKKLTVPVVSGARNLPEAVRRIFEGAAMVRTKGEAGTGNIIEAVRHIRKVNEEIAIVRRMTQDEIKTAAENIASSYFQLRNEASTDLFGQSGKVLYDDVYYGMSREKIVKGISDILRQIRKLNRLPVVNFAAGGVATPADGALMMELGADGVFVGSGIFKSPDPEKMAKSIVEAVENYKDYDVVARVSEGLQGMPGIDIESIPRDSRLQERGW.

D30 is a binding site for D-ribose 5-phosphate. K87 serves as the catalytic Schiff-base intermediate with D-ribose 5-phosphate. G159 serves as a coordination point for D-ribose 5-phosphate. Position 171 (R171) interacts with D-glyceraldehyde 3-phosphate. D-ribose 5-phosphate contacts are provided by residues G257 and 278–279; that span reads GS.

Belongs to the PdxS/SNZ family. In terms of assembly, in the presence of PdxT, forms a dodecamer of heterodimers.

The enzyme catalyses aldehydo-D-ribose 5-phosphate + D-glyceraldehyde 3-phosphate + L-glutamine = pyridoxal 5'-phosphate + L-glutamate + phosphate + 3 H2O + H(+). It participates in cofactor biosynthesis; pyridoxal 5'-phosphate biosynthesis. In terms of biological role, catalyzes the formation of pyridoxal 5'-phosphate from ribose 5-phosphate (RBP), glyceraldehyde 3-phosphate (G3P) and ammonia. The ammonia is provided by the PdxT subunit. Can also use ribulose 5-phosphate and dihydroxyacetone phosphate as substrates, resulting from enzyme-catalyzed isomerization of RBP and G3P, respectively. The protein is Pyridoxal 5'-phosphate synthase subunit PdxS of Thermoplasma volcanium (strain ATCC 51530 / DSM 4299 / JCM 9571 / NBRC 15438 / GSS1).